The following is a 391-amino-acid chain: Immunoglobulin heavy constant alpha 2 (391 aa).

Topologically, residues 1–357 (ASPTSPKVFP…TPGANLWPTT (357 aa)) are extracellular. 3 Ig-like domains span residues 6–98 (PKVF…QDVT), 112–207 (PRLS…ANIT), and 215–317 (PEVH…KTID). Cysteine 26 and cysteine 85 are oxidised to a cystine. Asparagine 47 carries an N-linked (GlcNAc...) asparagine glycan. Residue asparagine 92 is glycosylated (N-linked (GlcNAc...) (complex) asparagine). 2 cysteine pairs are disulfide-bonded: cysteine 110–cysteine 167 and cysteine 134–cysteine 191. A glycan (N-linked (GlcNAc...) asparagine) is linked at asparagine 131. An N-linked (GlcNAc...) (complex) asparagine glycan is attached at asparagine 205. Cysteine 237 and cysteine 300 form a disulfide bridge. Residue aspartate 327 is glycosylated (N-linked (GlcNAc...) (complex) asparagine). A helical transmembrane segment spans residues 358–379 (ITFLTLFLLSLFYSTALTVTSV). Topologically, residues 380-391 (RGPSGKREGPQY) are cytoplasmic.

In terms of assembly, immunoglobulins are composed of two identical heavy chains and two identical light chains; disulfide-linked. Monomeric or polymeric. Part of the secretory IgA (sIgA) complex that consists of two, four or five IgA monomers, and two additional non-Ig polypeptides, namely the JCHAIN and the secretory component (the proteolytic product of PIGR).

Its subcellular location is the secreted. The protein localises to the cell membrane. Functionally, constant region of immunoglobulin heavy chains. Immunoglobulins, also known as antibodies, are membrane-bound or secreted glycoproteins produced by B lymphocytes. In the recognition phase of humoral immunity, the membrane-bound immunoglobulins serve as receptors which, upon binding of a specific antigen, trigger the clonal expansion and differentiation of B lymphocytes into immunoglobulins-secreting plasma cells. Secreted immunoglobulins mediate the effector phase of humoral immunity, which results in the elimination of bound antigens. The antigen binding site is formed by the variable domain of one heavy chain, together with that of its associated light chain. Thus, each immunoglobulin has two antigen binding sites with remarkable affinity for a particular antigen. The variable domains are assembled by a process called V-(D)-J rearrangement and can then be subjected to somatic hypermutations which, after exposure to antigen and selection, allow affinity maturation for a particular antigen. Ig alpha is the major immunoglobulin class in body secretions. The sequence is that of Immunoglobulin heavy constant alpha 2 from Homo sapiens (Human).